Here is a 357-residue protein sequence, read N- to C-terminus: tRNA/tmRNA (uracil-C(5))-methyltransferase (357 aa).

5 residues coordinate S-adenosyl-L-methionine: glutamine 180, tyrosine 209, asparagine 214, glutamate 230, and aspartate 290. Residue cysteine 315 is the Nucleophile of the active site. Glutamate 349 (proton acceptor) is an active-site residue.

This sequence belongs to the class I-like SAM-binding methyltransferase superfamily. RNA M5U methyltransferase family. TrmA subfamily.

It catalyses the reaction uridine(54) in tRNA + S-adenosyl-L-methionine = 5-methyluridine(54) in tRNA + S-adenosyl-L-homocysteine + H(+). The catalysed reaction is uridine(341) in tmRNA + S-adenosyl-L-methionine = 5-methyluridine(341) in tmRNA + S-adenosyl-L-homocysteine + H(+). Its function is as follows. Dual-specificity methyltransferase that catalyzes the formation of 5-methyluridine at position 54 (m5U54) in all tRNAs, and that of position 341 (m5U341) in tmRNA (transfer-mRNA). The sequence is that of tRNA/tmRNA (uracil-C(5))-methyltransferase from Campylobacter jejuni subsp. jejuni serotype O:2 (strain ATCC 700819 / NCTC 11168).